A 356-amino-acid polypeptide reads, in one-letter code: Na(+)/H(+) exchange regulatory cofactor NHE-RF1 (356 aa).

At Ser2 the chain carries N-acetylserine. A phosphoserine mark is found at Ser2 and Ser46. The PDZ 1 domain occupies Leu14 to Glu94. The segment at Ala113–Leu142 is disordered. Residues Leu151–Glu231 form the PDZ 2 domain. The segment at Asn265–Leu356 is disordered. 4 positions are modified to phosphoserine: Ser266, Ser277, Ser287, and Ser288. Over residues Glu272–Ser288 the composition is skewed to low complexity. Thr290 is subject to Phosphothreonine. Ser291 and Ser299 each carry phosphoserine. Residues Glu307–Pro317 show a composition bias toward low complexity. Over residues Trp346–Leu356 the composition is skewed to basic and acidic residues.

In terms of assembly, homodimer, and heterodimer with NHERF2. Binds the N-termini of EZR, RDX and MSN. Binds the C-termini of PDGFRA, PDGFRB, ADRB2, NOS2 and CFTR. Binds ARHGAP17, EPI64, RACK1, OPRK1, GNAQ, CTNNB1 and PLCB3. Binds PDZK1. Interacts with CLCN3. Binds the C-terminus of PAG1. In resting T-cells, part of a PAG1-NHERF1-MSN complex which is disrupted upon TCR activation. Forms a complex with CFTR and SLC4A7. Forms a complex with SLC4A7 and ATP6V1B1. Interacts with TRPC4 (via the PDZ-binding domain). Directly interacts with HTR4. Interacts (via the PDZ 1 domain) with PODXL (via the C-terminal PDZ-binding motif DTHL); interaction is not detected in glomerular epithelium cells. Interacts (via the PDZ 1 domain) with PODXL (via the C-terminal PDZ-binding motif DTHL); the interaction take place early in the secretory pathway and is necessary for its apical membrane sorting. Interacts with SLC26A3. Interacts with MCC. Interacts with SLC34A1. Interacts (via the PDZ domains) with SLC26A6 isoform 4 and isoform 5. Interacts (via PDZ domains) with ACE2 (via PDZ-binding motif); the interaction may enhance ACE2 membrane residence.

The protein resides in the cytoplasm. Its subcellular location is the apical cell membrane. It is found in the cell projection. It localises to the filopodium. The protein localises to the ruffle. The protein resides in the microvillus. Its subcellular location is the endomembrane system. Functionally, scaffold protein that connects plasma membrane proteins with members of the ezrin/moesin/radixin family and thereby helps to link them to the actin cytoskeleton and to regulate their surface expression. Necessary for recycling of internalized ADRB2. Was first known to play a role in the regulation of the activity and subcellular location of SLC9A3. Necessary for cAMP-mediated phosphorylation and inhibition of SLC9A3. Involved in sperm capacitation. May participate in the regulation of the chloride and bicarbonate homeostasis in spermatozoa. May enhance Wnt signaling. May participate in HTR4 targeting to microvilli. Involved in the regulation of phosphate reabsorption in the renal proximal tubules. The protein is Na(+)/H(+) exchange regulatory cofactor NHE-RF1 (Nherf1) of Rattus norvegicus (Rat).